Reading from the N-terminus, the 285-residue chain is MARCO-like protein (285 aa).

Positions 1–20 (MRAFIFFLFMLLAMFSASST) are cleaved as a signal peptide. Asn-24 carries N-linked (GlcNAc...) asparagine glycosylation. Disordered stretches follow at residues 47–77 (NHLGGQRDSNKQGGSYTQGNPGTFRLQGQPG) and 91–285 (GRAG…QGNL). Polar residues-rich tracts occupy residues 57–67 (KQGGSYTQGNP) and 105–114 (SGKSNQKGNP). Residues 115–128 (ESSNKQENSGSSSQ) are compositionally biased toward low complexity. Residues 134–145 (ISTQQGNPGSSD) show a composition bias toward polar residues. Residues 160–173 (GSSSQQGKPGSSSQ) are compositionally biased toward low complexity. Over residues 174 to 185 (HGNLGSSTQKGN) the composition is skewed to polar residues. Low complexity predominate over residues 186-220 (LGSSSLQGHLGLSSHQGKPESSGQQGKPGSSSQQG). Positions 221–285 (NLGTSGQQEK…PGSSSRQGNL (65 aa)) are enriched in polar residues.

The polypeptide is MARCO-like protein (Homo sapiens (Human)).